A 244-amino-acid polypeptide reads, in one-letter code: Ferredoxin--NADP reductase B (244 aa).

One can recognise an FAD-binding FR-type domain in the interval 4-106; that stretch reads AEPFEARLVA…VGPHGLFTRD (103 aa). FAD-binding positions include 55–58 and Thr120; that span reads RAYS.

It belongs to the ferredoxin--NADP reductase type 1 family. The cofactor is FAD.

The enzyme catalyses 2 reduced [4Fe-4S]-[ferredoxin] + NADP(+) + H(+) = 2 oxidized [4Fe-4S]-[ferredoxin] + NADPH. Functionally, transports electrons between NADPH and ferredoxin. Can transfer electrons to ferredoxins Fdx2 and Fdx8. Prefers NADPH to NADH. The protein is Ferredoxin--NADP reductase B of Sorangium cellulosum (strain So ce56) (Polyangium cellulosum (strain So ce56)).